A 371-amino-acid chain; its full sequence is Alanine dehydrogenase (371 aa).

2 residues coordinate substrate: arginine 15 and lysine 75. Histidine 96 (proton donor/acceptor) is an active-site residue. NAD(+) contacts are provided by residues serine 134, aspartate 198, arginine 203, serine 220, valine 239 to leucine 240, valine 267 to aspartate 270, lysine 279, and valine 298 to methionine 301. Aspartate 270 functions as the Proton donor/acceptor in the catalytic mechanism.

This sequence belongs to the AlaDH/PNT family. It depends on Mg(2+) as a cofactor.

The catalysed reaction is L-alanine + NAD(+) + H2O = pyruvate + NH4(+) + NADH + H(+). The protein operates within amino-acid degradation; L-alanine degradation via dehydrogenase pathway; NH(3) and pyruvate from L-alanine: step 1/1. Catalyzes the reversible reductive amination of pyruvate to L-alanine. The chain is Alanine dehydrogenase from Halomonas elongata (strain ATCC 33173 / DSM 2581 / NBRC 15536 / NCIMB 2198 / 1H9).